Reading from the N-terminus, the 219-residue chain is MSRVKTTVVRKAGGQVWEDPTLLEWDPNHFRLFVGNLGNDVNDESLYQAFSEYPSLVKTKVVRDREGKTRGFGFVSFKDSDQFLKAWREKNGKYIGSRPVKLSRATSDVKPNEVNEKTIDSKIRNSLYSRTIHHGNRVQKKIKNKHGKNSSKSSRAAQSAAAELISSSSITGARPANSTSVPNAVNTEISAARATESEASRNQTKASRDYSRASSFRRV.

The 78-residue stretch at 30–107 (FRLFVGNLGN…RPVKLSRATS (78 aa)) folds into the RRM domain. Residues 140 to 149 (KKIKNKHGKN) show a composition bias toward basic residues. A disordered region spans residues 140-219 (KKIKNKHGKN…YSRASSFRRV (80 aa)). Residues 150–169 (SSKSSRAAQSAAAELISSSS) show a composition bias toward low complexity. A compositionally biased stretch (polar residues) spans 176–186 (ANSTSVPNAVN).

This is an uncharacterized protein from Schizosaccharomyces pombe (strain 972 / ATCC 24843) (Fission yeast).